We begin with the raw amino-acid sequence, 346 residues long: Peripherin-2 (346 aa).

The Cytoplasmic portion of the chain corresponds to Met1 to Asn24. The helical transmembrane segment at Trp25 to Ile43 threads the bilayer. Topologically, residues Glu44 to Pro61 are lumenal. N-linked (GlcNAc...) asparagine glycosylation is present at Asn53. The chain crosses the membrane as a helical span at residues Asn62–Lys80. The Cytoplasmic portion of the chain corresponds to Ile81–Lys99. Residues Ser100–Arg123 form a helical membrane-spanning segment. Residues Gly124–Ser264 lie on the Lumenal side of the membrane. Asn229 is a glycosylation site (N-linked (GlcNAc...) asparagine). The chain crosses the membrane as a helical span at residues Met265–Leu290. Residues Glu291 to Gly346 lie on the Cytoplasmic side of the membrane. Residues Gln341–Gly346 form an interaction with MREG region.

This sequence belongs to the PRPH2/ROM1 family. In terms of assembly, homodimer; disulfide-linked. Forms a homotetramer. Forms a heterotetramer with ROM1. Homotetramer and heterotetramer core complexes go on to form higher order complexes by formation of intermolecular disulfide bonds. Interacts with MREG. Interacts with STX3. Interacts with SNAP25. In terms of tissue distribution, retina (photoreceptor). In rim region of ROS (rod outer segment) disks.

It is found in the membrane. It localises to the cell projection. The protein localises to the cilium. The protein resides in the photoreceptor outer segment. Its subcellular location is the photoreceptor inner segment. Its function is as follows. Essential for retina photoreceptor outer segment disk morphogenesis, may also play a role with ROM1 in the maintenance of outer segment disk structure. Required for the maintenance of retinal outer nuclear layer thickness. Required for the correct development and organization of the photoreceptor inner segment. The sequence is that of Peripherin-2 (PRPH2) from Felis catus (Cat).